The following is a 124-amino-acid chain: Nucleoid-associated protein Noca_0318 (124 aa).

This sequence belongs to the YbaB/EbfC family. In terms of assembly, homodimer.

It is found in the cytoplasm. The protein resides in the nucleoid. Binds to DNA and alters its conformation. May be involved in regulation of gene expression, nucleoid organization and DNA protection. The polypeptide is Nucleoid-associated protein Noca_0318 (Nocardioides sp. (strain ATCC BAA-499 / JS614)).